A 156-amino-acid polypeptide reads, in one-letter code: MTIHHDTPPTLNLIRLANGEGLDLPAYESKGAAGMDLRAAVDGDAPLTLAPGERALLPTGFIFEIPEGFEGQVRPRSGLAFKHGITCLNSPGTVDSDYRGEVKVLLANLGEEAFVIERGMRIAQMVIAPVTQARVTEIAAASETARGAGGFGSTGV.

Residues 76-78 (RSG), N89, 93-95 (TVD), and K103 each bind substrate.

The protein belongs to the dUTPase family. The cofactor is Mg(2+).

The enzyme catalyses dUTP + H2O = dUMP + diphosphate + H(+). Its pathway is pyrimidine metabolism; dUMP biosynthesis; dUMP from dCTP (dUTP route): step 2/2. In terms of biological role, this enzyme is involved in nucleotide metabolism: it produces dUMP, the immediate precursor of thymidine nucleotides and it decreases the intracellular concentration of dUTP so that uracil cannot be incorporated into DNA. The protein is Deoxyuridine 5'-triphosphate nucleotidohydrolase of Rhizobium etli (strain ATCC 51251 / DSM 11541 / JCM 21823 / NBRC 15573 / CFN 42).